A 666-amino-acid polypeptide reads, in one-letter code: DNA mismatch repair protein MutL (666 aa).

It belongs to the DNA mismatch repair MutL/HexB family.

In terms of biological role, this protein is involved in the repair of mismatches in DNA. It is required for dam-dependent methyl-directed DNA mismatch repair. May act as a 'molecular matchmaker', a protein that promotes the formation of a stable complex between two or more DNA-binding proteins in an ATP-dependent manner without itself being part of a final effector complex. This Clostridium botulinum (strain Langeland / NCTC 10281 / Type F) protein is DNA mismatch repair protein MutL.